We begin with the raw amino-acid sequence, 405 residues long: Probable dual specificity protein kinase YAK1 homolog (405 aa).

Residues 40-335 (YMIIDMLGTG…AKSLASHSYL (296 aa)) form the Protein kinase domain. ATP contacts are provided by residues 46–54 (LGTGTFGQV) and Lys68. Catalysis depends on Asp163, which acts as the Proton acceptor.

The protein belongs to the protein kinase superfamily. CMGC Ser/Thr protein kinase family. MNB/DYRK subfamily.

The protein localises to the cytoplasm. The protein resides in the nucleus. The catalysed reaction is L-seryl-[protein] + ATP = O-phospho-L-seryl-[protein] + ADP + H(+). It catalyses the reaction L-threonyl-[protein] + ATP = O-phospho-L-threonyl-[protein] + ADP + H(+). The enzyme catalyses L-tyrosyl-[protein] + ATP = O-phospho-L-tyrosyl-[protein] + ADP + H(+). Negative regulator of the cell cycle acting downstream of the cAMP-dependent protein kinase. Part of a glucose-sensing system involved in growth control in response to glucose availability. The chain is Probable dual specificity protein kinase YAK1 homolog (YAK1) from Encephalitozoon cuniculi (strain GB-M1) (Microsporidian parasite).